A 328-amino-acid chain; its full sequence is Ketol-acid reductoisomerase (NADP(+)) (328 aa).

In terms of domain architecture, KARI N-terminal Rossmann spans 2 to 182; the sequence is AKIYRDVDAS…GATRAGVIET (181 aa). Residues 25-28, Arg48, Ser53, and 83-86 contribute to the NADP(+) site; these read YGIQ and DMEQ. The active site involves His108. Residue Gly134 coordinates NADP(+). One can recognise a KARI C-terminal knotted domain in the interval 183–328; it reads TFAEETETDL…IEMRRLLFGQ (146 aa). Residues Asp191, Glu195, Glu227, and Glu231 each coordinate Mg(2+). Ser252 lines the substrate pocket.

This sequence belongs to the ketol-acid reductoisomerase family. Mg(2+) is required as a cofactor.

It catalyses the reaction (2R)-2,3-dihydroxy-3-methylbutanoate + NADP(+) = (2S)-2-acetolactate + NADPH + H(+). The enzyme catalyses (2R,3R)-2,3-dihydroxy-3-methylpentanoate + NADP(+) = (S)-2-ethyl-2-hydroxy-3-oxobutanoate + NADPH + H(+). It functions in the pathway amino-acid biosynthesis; L-isoleucine biosynthesis; L-isoleucine from 2-oxobutanoate: step 2/4. The protein operates within amino-acid biosynthesis; L-valine biosynthesis; L-valine from pyruvate: step 2/4. Functionally, involved in the biosynthesis of branched-chain amino acids (BCAA). Catalyzes an alkyl-migration followed by a ketol-acid reduction of (S)-2-acetolactate (S2AL) to yield (R)-2,3-dihydroxy-isovalerate. In the isomerase reaction, S2AL is rearranged via a Mg-dependent methyl migration to produce 3-hydroxy-3-methyl-2-ketobutyrate (HMKB). In the reductase reaction, this 2-ketoacid undergoes a metal-dependent reduction by NADPH to yield (R)-2,3-dihydroxy-isovalerate. The sequence is that of Ketol-acid reductoisomerase (NADP(+)) from Pyrobaculum arsenaticum (strain DSM 13514 / JCM 11321 / PZ6).